We begin with the raw amino-acid sequence, 148 residues long: uncharacterized protein (148 aa).

The HTH asnC-type domain maps to Leu4–Met65. The H-T-H motif DNA-binding region spans Tyr23–Thr42.

This is an uncharacterized protein from Pyrococcus abyssi (strain GE5 / Orsay).